Here is a 396-residue protein sequence, read N- to C-terminus: NADH-quinone oxidoreductase subunit D (396 aa).

It belongs to the complex I 49 kDa subunit family. As to quaternary structure, NDH-1 is composed of 14 different subunits. Subunits NuoB, C, D, E, F, and G constitute the peripheral sector of the complex.

The protein resides in the cell inner membrane. The catalysed reaction is a quinone + NADH + 5 H(+)(in) = a quinol + NAD(+) + 4 H(+)(out). NDH-1 shuttles electrons from NADH, via FMN and iron-sulfur (Fe-S) centers, to quinones in the respiratory chain. The immediate electron acceptor for the enzyme in this species is believed to be ubiquinone. Couples the redox reaction to proton translocation (for every two electrons transferred, four hydrogen ions are translocated across the cytoplasmic membrane), and thus conserves the redox energy in a proton gradient. In Chelativorans sp. (strain BNC1), this protein is NADH-quinone oxidoreductase subunit D.